A 457-amino-acid chain; its full sequence is Argininosuccinate lyase (457 aa).

The protein belongs to the lyase 1 family. Argininosuccinate lyase subfamily.

The protein localises to the cytoplasm. It catalyses the reaction 2-(N(omega)-L-arginino)succinate = fumarate + L-arginine. The protein operates within amino-acid biosynthesis; L-arginine biosynthesis; L-arginine from L-ornithine and carbamoyl phosphate: step 3/3. The chain is Argininosuccinate lyase from Psychrobacter cryohalolentis (strain ATCC BAA-1226 / DSM 17306 / VKM B-2378 / K5).